Reading from the N-terminus, the 120-residue chain is Insulin-like peptide 3 (120 aa).

Positions M1–A29 are cleaved as a signal peptide. Cystine bridges form between C34–C101, C46–C114, and C100–C105. Positions N51 to T89 are cleaved as a propeptide — connecting peptide.

It belongs to the insulin family. Heterodimer of a B chain and an A chain linked by two disulfide bonds. In terms of tissue distribution, expressed at a high level in seven cells of each larval brain hemisphere that may correspond to neurosecretory cells.

It localises to the secreted. In terms of biological role, possible ligand of InR/insulin-like receptor. The sequence is that of Insulin-like peptide 3 from Drosophila melanogaster (Fruit fly).